Reading from the N-terminus, the 239-residue chain is ATP-dependent dethiobiotin synthetase BioD (239 aa).

22 to 27 (GIGKTV) contributes to the ATP binding site. Threonine 26 provides a ligand contact to Mg(2+). Lysine 47 is an active-site residue. Residue threonine 51 participates in substrate binding. Residues aspartate 59, 124–127 (EGVG), and 184–185 (NR) each bind ATP. Residues aspartate 59 and glutamate 124 each contribute to the Mg(2+) site.

Belongs to the dethiobiotin synthetase family. As to quaternary structure, homodimer. Requires Mg(2+) as cofactor.

The protein resides in the cytoplasm. It catalyses the reaction (7R,8S)-7,8-diammoniononanoate + CO2 + ATP = (4R,5S)-dethiobiotin + ADP + phosphate + 3 H(+). The protein operates within cofactor biosynthesis; biotin biosynthesis; biotin from 7,8-diaminononanoate: step 1/2. Catalyzes a mechanistically unusual reaction, the ATP-dependent insertion of CO2 between the N7 and N8 nitrogen atoms of 7,8-diaminopelargonic acid (DAPA, also called 7,8-diammoniononanoate) to form a ureido ring. In Chlorobaculum tepidum (strain ATCC 49652 / DSM 12025 / NBRC 103806 / TLS) (Chlorobium tepidum), this protein is ATP-dependent dethiobiotin synthetase BioD.